The chain runs to 222 residues: Beta-casein (222 aa).

Positions 1 to 15 are cleaved as a signal peptide; sequence MKVLILACLVALAIA. Thr-27 carries the post-translational modification Phosphothreonine. A phosphoserine mark is found at Ser-30, Ser-32, Ser-33, and Ser-34.

This sequence belongs to the beta-casein family. In terms of tissue distribution, mammary gland specific. Secreted in milk.

The protein resides in the secreted. Functionally, important role in determination of the surface properties of the casein micelles. The sequence is that of Beta-casein (CSN2) from Capra hircus (Goat).